Consider the following 401-residue polypeptide: Phosphoglycerate kinase 3, cytosolic (401 aa).

11 residues coordinate (2R)-3-phosphoglycerate: V24, D25, N27, R41, S63, H64, G66, R67, R122, H154, and R155. ADP is bound at residue G200. G200 is a binding site for CDP. K202 and K206 together coordinate AMP. Residue K206 coordinates ATP. G224 is an ADP binding site. G224 provides a ligand contact to CDP. AMP is bound by residues G225 and G297. Positions 225, 297, and 321 each coordinate ATP. 2 residues coordinate CDP: G322 and F327. Residue F327 participates in ADP binding. An AMP-binding site is contributed by E328. ATP is bound by residues E328, D359, and S360. D359 is a Mg(2+) binding site.

The protein belongs to the phosphoglycerate kinase family. Monomer. Requires Mg(2+) as cofactor. Expressed in roots, leaves and inflorescence.

The protein localises to the cytoplasm. The enzyme catalyses (2R)-3-phosphoglycerate + ATP = (2R)-3-phospho-glyceroyl phosphate + ADP. It participates in carbohydrate degradation; glycolysis; pyruvate from D-glyceraldehyde 3-phosphate: step 2/5. This Arabidopsis thaliana (Mouse-ear cress) protein is Phosphoglycerate kinase 3, cytosolic.